A 547-amino-acid chain; its full sequence is RNA polymerase sigma factor sigF, chloroplastic (547 aa).

Positions methionine 1–lysine 17 are enriched in polar residues. Disordered stretches follow at residues methionine 1–serine 28 and phenylalanine 54–threonine 79. Residues methionine 1–proline 55 constitute a chloroplast transit peptide. Residues glutamate 62–threonine 79 show a composition bias toward basic and acidic residues. Serine 94, serine 95, serine 174, serine 176, serine 177, and serine 180 each carry phosphoserine; by CK2. The tract at residues alanine 163–lysine 226 is disordered. Over residues serine 172–leucine 181 the composition is skewed to low complexity. Threonine 249 is subject to Phosphothreonine; by CK2. The Polymerase core binding signature appears at aspartate 335–valine 348. Residues leucine 505–serine 524 constitute a DNA-binding region (H-T-H motif).

Belongs to the sigma-70 factor family. Interacts (via N-terminus) with DG1 (via C-terminus). Phosphorylated to acquire sigma activity; site-specific phosphorylation regulates promoter affinity. Phosphorylation at Ser-174 by chloroplastic CK2 requires prior phosphorylation at Ser-177. Phosphorylation at either Ser-94, Ser-95 or Ser-174 is required for sigma activation. Expressed in seedling, accumulating progressively. Present in leaves but not in roots.

Its subcellular location is the plastid. It localises to the chloroplast. Its function is as follows. Sigma factors are initiation factors that promote the attachment of plastid-encoded RNA polymerase (PEP) to specific initiation sites and are then released. Regulates transcription in chloroplast in a DG1-dependent manner. Involved in light-dependent chloroplast development. Required during early plant development and primary leaf formation. The protein is RNA polymerase sigma factor sigF, chloroplastic (SIGF) of Arabidopsis thaliana (Mouse-ear cress).